We begin with the raw amino-acid sequence, 292 residues long: 4-hydroxy-tetrahydrodipicolinate synthase (292 aa).

Thr45 contributes to the pyruvate binding site. Tyr133 functions as the Proton donor/acceptor in the catalytic mechanism. Catalysis depends on Lys161, which acts as the Schiff-base intermediate with substrate. A pyruvate-binding site is contributed by Ile203.

This sequence belongs to the DapA family. As to quaternary structure, homotetramer; dimer of dimers.

The protein localises to the cytoplasm. It catalyses the reaction L-aspartate 4-semialdehyde + pyruvate = (2S,4S)-4-hydroxy-2,3,4,5-tetrahydrodipicolinate + H2O + H(+). Its pathway is amino-acid biosynthesis; L-lysine biosynthesis via DAP pathway; (S)-tetrahydrodipicolinate from L-aspartate: step 3/4. In terms of biological role, catalyzes the condensation of (S)-aspartate-beta-semialdehyde [(S)-ASA] and pyruvate to 4-hydroxy-tetrahydrodipicolinate (HTPA). The chain is 4-hydroxy-tetrahydrodipicolinate synthase from Sodalis glossinidius (strain morsitans).